Reading from the N-terminus, the 1324-residue chain is Myotubularin-related protein DDB_G0290005 (1324 aa).

The disordered stretch occupies residues 140–276; it reads KYHDNTTPNN…TSSTNGNCST (137 aa). Residues 144-180 are compositionally biased toward low complexity; it reads NTTPNNNNNNNNNNNNNNNNTNNNNNNNINKSNNSST. Residues 181 to 194 show a composition bias toward polar residues; the sequence is DQLNSFSLEKQPSQ. Positions 195–222 are enriched in low complexity; sequence NENLNNNNNNNNNNNNGNNNINNNNLMN. Positions 223–247 are enriched in polar residues; the sequence is SLTQPSTSSRSRLLKSNSTPINLNE. Positions 248–276 are enriched in low complexity; that stretch reads SSTSTNSPTLSSTTTTTTTTSSTNGNCST. The Myotubularin phosphatase domain maps to 349-807; the sequence is GWLFYDPIEE…KGVQLWSDYF (459 aa). Residues 514–515, 575–581, and R621 contribute to the substrate site; these read NI and CIDGWDR. The active-site Phosphocysteine intermediate is C575. Disordered regions lie at residues 624–664, 841–1043, 1066–1110, 1144–1213, and 1232–1296; these read QSIS…TTTS, QKKK…QQQE, EQQE…QQQT, RKQE…LTMP, and LHPN…DNTS. 2 stretches are compositionally biased toward low complexity: residues 625 to 664 and 852 to 864; these read SISS…TTTS and GASG…SGSS. Over residues 865–882 the composition is skewed to basic residues; that stretch reads SKHHHHHHHHHHHHHHRK. Over residues 883 to 894 the composition is skewed to basic and acidic residues; that stretch reads STDEKDSKEKSS. Low complexity-rich tracts occupy residues 899 to 914 and 927 to 973; these read SRTS…STSS and TITT…TTTP. The span at 988–1002 shows a compositional bias: basic and acidic residues; it reads DKLKSPSGDDIKQEQ. Residues 1005–1024 show a composition bias toward polar residues; it reads MNQFTSQHPNNQMESSSEIN. Residues 1020–1195 are a coiled coil; it reads SSEINQQNEQ…LEQQKPKADI (176 aa). The segment covering 1025-1043 has biased composition (low complexity); it reads QQNEQSQLEQQQEQQQQQE. A compositionally biased stretch (polar residues) spans 1079-1090; that stretch reads PNETITYSMESD. The span at 1091-1109 shows a compositional bias: low complexity; that stretch reads SQSSISQNQNQLQQQQQQQ. The span at 1144–1193 shows a compositional bias: basic and acidic residues; that stretch reads RKQEKEKRKLEKEKKQKERAERKLEKEKKRDQKEREQKEKELLEQQKPKA. The segment covering 1234–1243 has biased composition (polar residues); sequence PNLSDQNSQT. 2 stretches are compositionally biased toward low complexity: residues 1244 to 1258 and 1265 to 1294; these read NSSG…NSPN and SNLS…NNDN.

The protein belongs to the protein-tyrosine phosphatase family. Non-receptor class myotubularin subfamily.

The protein localises to the cytoplasm. Functionally, phosphatase that acts on lipids with a phosphoinositol headgroup. The polypeptide is Myotubularin-related protein DDB_G0290005 (Dictyostelium discoideum (Social amoeba)).